A 913-amino-acid chain; its full sequence is Protein translocase subunit SecA (913 aa).

ATP-binding positions include Gln-87, 105 to 109, and Asp-512; that span reads GEGKT. Zn(2+)-binding residues include Cys-897, Cys-899, Cys-908, and His-909.

This sequence belongs to the SecA family. Monomer and homodimer. Part of the essential Sec protein translocation apparatus which comprises SecA, SecYEG and auxiliary proteins SecDF-YajC and YidC. The cofactor is Zn(2+).

The protein localises to the cell inner membrane. Its subcellular location is the cytoplasm. It catalyses the reaction ATP + H2O + cellular proteinSide 1 = ADP + phosphate + cellular proteinSide 2.. Part of the Sec protein translocase complex. Interacts with the SecYEG preprotein conducting channel. Has a central role in coupling the hydrolysis of ATP to the transfer of proteins into and across the cell membrane, serving both as a receptor for the preprotein-SecB complex and as an ATP-driven molecular motor driving the stepwise translocation of polypeptide chains across the membrane. The protein is Protein translocase subunit SecA of Pseudomonas savastanoi pv. phaseolicola (strain 1448A / Race 6) (Pseudomonas syringae pv. phaseolicola (strain 1448A / Race 6)).